Consider the following 422-residue polypeptide: Probable alpha-1,6-mannosyltransferase MNN11 (422 aa).

Residues 1–31 are Cytoplasmic-facing; sequence MAIKPRTKGKTYSSRSVGSQWFNRLGFKQNK. Residues 32–52 traverse the membrane as a helical; Signal-anchor for type II membrane protein segment; the sequence is YGTCKFLSIITAFVFILYFFS. The Lumenal segment spans residues 53-422; that stretch reads NRFYPISRSA…GHMYQKIKKS (370 aa).

This sequence belongs to the glycosyltransferase 34 family. As to quaternary structure, component of the M-Pol II complex composed of ANP1, MNN9, MNN10, MNN11 and HOC1.

The protein resides in the golgi apparatus. The protein localises to the cis-Golgi network membrane. Its function is as follows. Required for synthesis of full-length mannan chains. In terms of biological role, the M-Pol II complex possesses alpha-1,6-mannosyltransferase activity and is probably involved in the elongation of the mannan backbone of N-linked glycans on cell wall and periplasmic proteins. The chain is Probable alpha-1,6-mannosyltransferase MNN11 (MNN11) from Saccharomyces cerevisiae (strain ATCC 204508 / S288c) (Baker's yeast).